Reading from the N-terminus, the 368-residue chain is Chaperone protein DnaJ (368 aa).

Positions 5-70 (DYYQVLGVPR…KKRKLYDTHG (66 aa)) constitute a J domain. The CR-type zinc-finger motif lies at 124–201 (GVERQIQIPT…CNGAGRVEDH (78 aa)). 8 residues coordinate Zn(2+): C137, C140, C153, C156, C175, C178, C189, and C192. CXXCXGXG motif repeat units follow at residues 137–144 (CTHCHGSG), 153–160 (CGTCRGSG), 175–182 (CPHCGGRG), and 189–196 (CKVCNGAG).

It belongs to the DnaJ family. Homodimer. Zn(2+) is required as a cofactor.

It is found in the cytoplasm. Functionally, participates actively in the response to hyperosmotic and heat shock by preventing the aggregation of stress-denatured proteins and by disaggregating proteins, also in an autonomous, DnaK-independent fashion. Unfolded proteins bind initially to DnaJ; upon interaction with the DnaJ-bound protein, DnaK hydrolyzes its bound ATP, resulting in the formation of a stable complex. GrpE releases ADP from DnaK; ATP binding to DnaK triggers the release of the substrate protein, thus completing the reaction cycle. Several rounds of ATP-dependent interactions between DnaJ, DnaK and GrpE are required for fully efficient folding. Also involved, together with DnaK and GrpE, in the DNA replication of plasmids through activation of initiation proteins. The sequence is that of Chaperone protein DnaJ from Xylella fastidiosa (strain M23).